Here is a 213-residue protein sequence, read N- to C-terminus: Oxidase ustYa (213 aa).

The tract at residues 1-26 is disordered; sequence MAERSSNGYKEVPVRQSEESTIAEEE. The chain crosses the membrane as a helical span at residues 48–68; the sequence is AVWFLIALLLLSNIGLLGGLI. N-linked (GlcNAc...) asparagine glycosylation occurs at Asn98. Short sequence motifs (HXXHC) lie at residues 123–127 and 150–154; these read HQLHC and HLMHC.

It belongs to the ustYa family.

It localises to the membrane. Its pathway is mycotoxin biosynthesis. Its function is as follows. Oxidase; part of the gene cluster that mediates the biosynthesis of the secondary metabolite ustiloxin B, an antimitotic tetrapeptide. First, ustA is processed by the subtilisin-like endoprotease Kex2 that is outside the ustiloxin B gene cluster, at the C-terminal side of Arg-Lys, after transfer to Golgi apparatus through the endoplasmic reticulum (ER). Cleavage by KEX2 generates 16 peptides YAIG-I to YAIG-XVI. To process the precursor peptide further, at least two peptidases are necessary to cleave the N-terminal and C-terminal sides of the Tyr-Ala-Ile-Gly core peptide which serves as backbone for the synthesis of ustiloxin B, through cyclization and modification of the tyrosine with a non-protein coding amino acid, norvaline. One of the two peptidases must be the serine peptidase ustP; and the other pepdidase is probably ustH. Macrocyclization of the core peptide derived from ustA requires the tyrosinase ustQ, as well as the homologous oxidases ustYa and ustYb, and leads to the production of the first cyclization product N-desmethylustiloxin F. For the formation of N-desmethylustiloxin F, three oxidation steps are required, hydroxylation at the benzylic position, hydroxylation at either the aromatic ring of Tyr or beta-position of Ile, and oxidative cyclization. UstQ may catalyze the oxidation of a phenol moiety, whereas the ustYa and ustYb are most likely responsible for the remaining two-step oxidations. N-desmethylustiloxin F is then methylated by ustM to yield ustiloxin F which in turn substrate of the cytochrome P450 monooxygenase ustC which catalyzes the formation of S-deoxyustiloxin H. The flavoprotein monooxygenases ustF1 and ustF2 then participate in the modification of the side chain of S-deoxyustiloxin H, leading to the synthesis of an oxime intermediate, via ustiloxin H. Finally, carboxylative dehydration performed by the cysteine desulfurase-like protein ustD yields ustiloxin B. In Aspergillus flavus (strain ATCC 200026 / FGSC A1120 / IAM 13836 / NRRL 3357 / JCM 12722 / SRRC 167), this protein is Oxidase ustYa.